Here is a 173-residue protein sequence, read N- to C-terminus: Regulatory protein RecX (173 aa).

It belongs to the RecX family.

It is found in the cytoplasm. Its function is as follows. Modulates RecA activity. The protein is Regulatory protein RecX of Mycobacterium avium (strain 104).